The chain runs to 185 residues: Ribosome-recycling factor (185 aa).

The interval 163–185 is disordered; it reads LTNEATKKIDAISKDKEKEITEG. Basic and acidic residues predominate over residues 167–185; sequence ATKKIDAISKDKEKEITEG.

The protein belongs to the RRF family.

The protein localises to the cytoplasm. Its function is as follows. Responsible for the release of ribosomes from messenger RNA at the termination of protein biosynthesis. May increase the efficiency of translation by recycling ribosomes from one round of translation to another. The polypeptide is Ribosome-recycling factor (Latilactobacillus sakei subsp. sakei (strain 23K) (Lactobacillus sakei subsp. sakei)).